The chain runs to 178 residues: Caveolin-1 (178 aa).

Serine 2 carries the N-acetylserine modification. Residue serine 2 is modified to Phosphoserine. The segment at 2-94 is required for homooligomerization; the sequence is SGGKYVDSEG…WKASFTTFTV (93 aa). The Cytoplasmic portion of the chain corresponds to 2-104; sequence SGGKYVDSEG…TKYWFYRLLS (103 aa). An N6-acetyllysine; alternate modification is found at lysine 5. Lysine 5 is covalently cross-linked (Glycyl lysine isopeptide (Lys-Gly) (interchain with G-Cter in ubiquitin); alternate). Tyrosine 6 carries the post-translational modification Phosphotyrosine. At serine 9 the chain carries Phosphoserine. At tyrosine 14 the chain carries Phosphotyrosine; by ABL1. Residue tyrosine 25 is modified to Phosphotyrosine. Residues lysine 26 and lysine 30 each participate in a glycyl lysine isopeptide (Lys-Gly) (interchain with G-Cter in ubiquitin) cross-link. Serine 37 bears the Phosphoserine mark. Residues lysine 39, lysine 47, and lysine 57 each participate in a glycyl lysine isopeptide (Lys-Gly) (interchain with G-Cter in ubiquitin) cross-link. Positions 82–94 are interaction with CAVIN3; it reads DGIWKASFTTFTV. An intramembrane region (helical) is located at residues 105-125; it reads ALFGIPMALIWGIYFAILSFL. Residues 126–178 are Cytoplasmic-facing; the sequence is HIWAVVPCIKSFLIEIQCISRVYSIYVHTFCDPFFEAVGKIFSNIRINMQKET. An interacts with SPRY1, SPRY2, SPRY3 and SPRY4 region spans residues 131 to 142; that stretch reads VPCIKSFLIEIQ. S-palmitoyl cysteine attachment occurs at residues cysteine 133, cysteine 143, and cysteine 156. The segment at 149–160 is interacts with SPRY1, SPRY2, and SPRY4; the sequence is SIYVHTFCDPFF. The interval 167–178 is interacts with SPRY1, SPRY2, SPRY3 and SPRY4; that stretch reads FSNIRINMQKET.

This sequence belongs to the caveolin family. Homooligomer. Interacts with BMX, BTK, GLIPR2, NOSTRIN, SNAP25 and STX1A. Interacts with PACSIN2; this interaction induces membrane tubulation. Interacts (via the N-terminus) with DPP4; the interaction is direct. Interacts with SLC7A9. Interacts with CTNNB1, CDH1 and JUP. Interacts with TGFBR1. Interacts with CAVIN3 (via leucine-zipper domain) in a cholesterol-sensitive manner. Interacts with CAVIN1. Interacts with EHD2 in a cholesterol-dependent manner. Forms a ternary complex with UBXN6 and VCP; mediates CAV1 targeting to lysosomes for degradation. Interacts with ABCG1; this interaction regulates ABCG1-mediated cholesterol efflux. Interacts with NEU3; this interaction enhances NEU3 sialidase activity within caveola. Interacts (via C-terminus) with SPRY1, SPRY2 (via C-terminus), SPRY3, and SPRY4. Interacts with IGFBP5; this interaction allows trafficking of IGFBP5 from the plasma membrane to the nucleus. Post-translationally, phosphorylation of isoform Beta on serine residues is constitutive. Phosphorylated at Tyr-14 by ABL1 in response to oxidative stress. In terms of processing, ubiquitinated. Undergo monoubiquitination and multi- and/or polyubiquitination. Monoubiquitination of N-terminal lysines promotes integration in a ternary complex with UBXN6 and VCP which promotes oligomeric CAV1 targeting to lysosomes for degradation. Ubiquitinated by ZNRF1; leading to degradation and modulation of the TLR4-mediated immune response.

It is found in the golgi apparatus membrane. The protein localises to the cell membrane. The protein resides in the membrane. Its subcellular location is the caveola. It localises to the membrane raft. It is found in the golgi apparatus. The protein localises to the trans-Golgi network. Its function is as follows. May act as a scaffolding protein within caveolar membranes. Forms a stable heterooligomeric complex with CAV2 that targets to lipid rafts and drives caveolae formation. Mediates the recruitment of CAVIN proteins (CAVIN1/2/3/4) to the caveolae. Interacts directly with G-protein alpha subunits and can functionally regulate their activity. Involved in the costimulatory signal essential for T-cell receptor (TCR)-mediated T-cell activation. Its binding to DPP4 induces T-cell proliferation and NF-kappa-B activation in a T-cell receptor/CD3-dependent manner. Recruits CTNNB1 to caveolar membranes and may regulate CTNNB1-mediated signaling through the Wnt pathway. Negatively regulates TGFB1-mediated activation of SMAD2/3 by mediating the internalization of TGFBR1 from membrane rafts leading to its subsequent degradation. Binds 20(S)-hydroxycholesterol (20(S)-OHC). In Canis lupus familiaris (Dog), this protein is Caveolin-1 (CAV1).